The sequence spans 272 residues: 2-amino-3,7-dideoxy-D-threo-hept-6-ulosonate synthase (272 aa).

The active-site Proton acceptor is aspartate 33. 1-deoxy-D-threo-hexo-2,5-diulose 6-phosphate contacts are provided by residues 33–37 (DHGVS) and 153–155 (YPR). Catalysis depends on tyrosine 153, which acts as the Proton donor. The active-site Schiff-base intermediate with substrate is the lysine 184. 1-deoxy-D-threo-hexo-2,5-diulose 6-phosphate is bound by residues 209 to 210 (GG) and 237 to 238 (GR).

It belongs to the DeoC/FbaB aldolase family. ADHS subfamily. In terms of assembly, homodecamer.

It carries out the reaction 1-deoxy-D-threo-hexo-2,5-diulose 6-phosphate + L-aspartate 4-semialdehyde = 2,3-dioxopropyl phosphate + 2-amino-2,3,7-trideoxy-D-lyxo-hept-6-ulosonate. Functionally, catalyzes a transaldol reaction between 6-deoxy-5-ketofructose 1-phosphate (DKFP) and L-aspartate semialdehyde (ASA) with an elimination of hydroxypyruvaldehyde phosphate to yield 2-amino-3,7-dideoxy-D-threo-hept-6-ulosonate (ADH). Plays a key role in an alternative pathway of the biosynthesis of 3-dehydroquinate (DHQ), which is involved in the canonical pathway for the biosynthesis of aromatic amino acids. The protein is 2-amino-3,7-dideoxy-D-threo-hept-6-ulosonate synthase of Methanococcus maripaludis (strain C5 / ATCC BAA-1333).